A 188-amino-acid polypeptide reads, in one-letter code: Cytochrome b561 homolog 2 (188 aa).

Residues 1–15 (MSFTNTPERYGVISA) lie on the Cytoplasmic side of the membrane. The helical transmembrane segment at 16 to 36 (AFHWLSAIIVYGMFALGLWMV) threads the bilayer. H18 and H52 together coordinate heme b. Topologically, residues 37–54 (TLSYYDGWYHKAPELHKS) are periplasmic. Residues 55 to 75 (IGILLMMGLVIRVLWRVISPP) traverse the membrane as a helical segment. Topologically, residues 76 to 91 (PGPLPSYSPMTRLAAR) are cytoplasmic. A helical membrane pass occupies residues 92-112 (AGHLALYLLLFAIGISGYLIS). Over 113 to 143 (TADGKPISVFGWFDVPATLADAGAQADFAGA) the chain is Periplasmic. The helical transmembrane segment at 144 to 164 (LHFWLAWSVVVLSVMHGFMAL) threads the bilayer. Heme b-binding residues include H145 and H159. Residues 165 to 188 (KHHFIDKDDTLKRMLGKSSSDYGV) are Cytoplasmic-facing.

Belongs to the cytochrome b561 family. It depends on heme b as a cofactor.

The protein resides in the cell inner membrane. This is Cytochrome b561 homolog 2 (yceJ) from Escherichia coli (strain K12).